Consider the following 353-residue polypeptide: Dimethylsulfoniopropionate lyase 2 (353 aa).

Active-site proton donor/acceptor residues include Cys-125 and Cys-274. Residues 326 to 353 form a disordered region; the sequence is DPNETDVSKGRPTKAEHRFGPEFEEMLQ. A compositionally biased stretch (basic and acidic residues) spans 331 to 346; the sequence is DVSKGRPTKAEHRFGP.

Belongs to the aspartate/glutamate racemases family. ALMA1 subfamily. As to quaternary structure, homotetramer.

The enzyme catalyses S,S-dimethyl-beta-propiothetin = acrylate + dimethyl sulfide + H(+). Mediates cleavage of dimethylsulfoniopropionate (DMSP) into dimethyl sulfide (DMS) and acrylate. DMS is the principal form by which sulfur is transported from oceans to the atmosphere and is a key component of the ocean sulfur cycle. The sequence is that of Dimethylsulfoniopropionate lyase 2 from Emiliania huxleyi (strain CCMP1516).